The primary structure comprises 47 residues: Defensin-like protein 2 (47 aa).

4 disulfide bridges follow: Cys-5/Cys-47, Cys-16/Cys-36, Cys-22/Cys-43, and Cys-26/Cys-45.

The protein belongs to the DEFL family.

Its function is as follows. Fabatins have antibacterial activity against Gram-positive and Gram-negative bacteria. High activity against P.aeruginosa. No activity against S.cerevisiae and C.albicans. The protein is Defensin-like protein 2 of Vicia faba (Broad bean).